The primary structure comprises 199 residues: Recombination protein RecR (199 aa).

The C4-type zinc-finger motif lies at 58 to 73 (CKVCTNLTDQEVCNIC). In terms of domain architecture, Toprim spans 81–176 (LLICVVEDPR…KVSRIAHGIP (96 aa)).

This sequence belongs to the RecR family.

In terms of biological role, may play a role in DNA repair. It seems to be involved in an RecBC-independent recombinational process of DNA repair. It may act with RecF and RecO. The sequence is that of Recombination protein RecR from Alkaliphilus oremlandii (strain OhILAs) (Clostridium oremlandii (strain OhILAs)).